The chain runs to 72 residues: Protein SlyX homolog (72 aa).

The protein belongs to the SlyX family.

The sequence is that of Protein SlyX homolog from Vibrio cholerae serotype O1 (strain ATCC 39541 / Classical Ogawa 395 / O395).